The following is a 468-amino-acid chain: ATP synthase subunit beta (468 aa).

Glycine 155–threonine 162 is an ATP binding site.

Belongs to the ATPase alpha/beta chains family. In terms of assembly, F-type ATPases have 2 components, CF(1) - the catalytic core - and CF(0) - the membrane proton channel. CF(1) has five subunits: alpha(3), beta(3), gamma(1), delta(1), epsilon(1). CF(0) has three main subunits: a(1), b(2) and c(9-12). The alpha and beta chains form an alternating ring which encloses part of the gamma chain. CF(1) is attached to CF(0) by a central stalk formed by the gamma and epsilon chains, while a peripheral stalk is formed by the delta and b chains.

Its subcellular location is the cell membrane. It carries out the reaction ATP + H2O + 4 H(+)(in) = ADP + phosphate + 5 H(+)(out). Functionally, produces ATP from ADP in the presence of a proton gradient across the membrane. The catalytic sites are hosted primarily by the beta subunits. In Streptococcus gordonii (strain Challis / ATCC 35105 / BCRC 15272 / CH1 / DL1 / V288), this protein is ATP synthase subunit beta.